A 710-amino-acid chain; its full sequence is Probable inactive DNA (cytosine-5)-methyltransferase DRM3 (710 aa).

Residues 1–21 (MADMRRRNGSGGSSNHERNEQ) form a disordered region. In terms of domain architecture, UBA 1 spans 52-92 (SGSNVKSLLIEMGFCPTLVQKAIDENGQDDFELLLEILTKS). Over residues 167-184 (ESEDSLDGAEINEEDEDV) the composition is skewed to acidic residues. Positions 167 to 192 (ESEDSLDGAEINEEDEDVTPVTARGP) are disordered. One can recognise a UBA 2 domain in the interval 198-242 (QLFETMDKTLRLLEMGFSNDEISMAIEKIGTKGQISVLAESIVTG). The segment at 282 to 360 (AQKEDGGGGS…MGDSSSFMET (79 aa)) is disordered. Residues 339 to 350 (YDDRGKRLRPED) are compositionally biased toward basic and acidic residues. Residues 379 to 710 (QPRLSQSLGP…RVTKRVRDMM (332 aa)) form the SAM-dependent MTase DRM-type domain.

The protein belongs to the class I-like SAM-binding methyltransferase superfamily. DRM-methyltransferase family. As to quaternary structure, interacts with Pol V.

Its subcellular location is the nucleus. Its function is as follows. Catalytically inactive DNA methyltransferase that acts as regulatory factor for DRM2-mediated DNA methylation. Required for maintenance of non-CpG DNA methylation. Required for normal establishment and maintenance of RNA-directed DNA methylation (RdDM) and accumulation of specific repeat-associated small interfering RNAs (siRNAs). Required for nucleolus organizer region (NOR) nuclear organization during interphase. Acts downstream of the production of siRNAs. May promote RNA polymerase V (Pol V) transcriptional elongation or assist in the stabilization of Pol V transcripts. In Arabidopsis thaliana (Mouse-ear cress), this protein is Probable inactive DNA (cytosine-5)-methyltransferase DRM3.